The following is a 27-amino-acid chain: Alpha-amylase/trypsin inhibitor CM17 (27 aa).

The protein belongs to the protease inhibitor I6 (cereal trypsin/alpha-amylase inhibitor) family. In terms of tissue distribution, developing endosperm.

It is found in the secreted. In terms of biological role, alpha-amylase/trypsin inhibitor. It could be involved in insect defense mechanisms. This chain is Alpha-amylase/trypsin inhibitor CM17, found in Triticum aestivum (Wheat).